Reading from the N-terminus, the 946-residue chain is Bifunctional glutamine synthetase adenylyltransferase/adenylyl-removing enzyme (946 aa).

The adenylyl removase stretch occupies residues 1–440; sequence MKPLSSPLQQ…VFNELIGDDE (440 aa). Residues 449–946 form an adenylyl transferase region; it reads SEQWRELWQD…ASWQKWLVEE (498 aa).

This sequence belongs to the GlnE family. The cofactor is Mg(2+).

It catalyses the reaction [glutamine synthetase]-O(4)-(5'-adenylyl)-L-tyrosine + phosphate = [glutamine synthetase]-L-tyrosine + ADP. The enzyme catalyses [glutamine synthetase]-L-tyrosine + ATP = [glutamine synthetase]-O(4)-(5'-adenylyl)-L-tyrosine + diphosphate. Involved in the regulation of glutamine synthetase GlnA, a key enzyme in the process to assimilate ammonia. When cellular nitrogen levels are high, the C-terminal adenylyl transferase (AT) inactivates GlnA by covalent transfer of an adenylyl group from ATP to specific tyrosine residue of GlnA, thus reducing its activity. Conversely, when nitrogen levels are low, the N-terminal adenylyl removase (AR) activates GlnA by removing the adenylyl group by phosphorolysis, increasing its activity. The regulatory region of GlnE binds the signal transduction protein PII (GlnB) which indicates the nitrogen status of the cell. The chain is Bifunctional glutamine synthetase adenylyltransferase/adenylyl-removing enzyme from Escherichia coli O7:K1 (strain IAI39 / ExPEC).